Consider the following 274-residue polypeptide: 2,3,4,5-tetrahydropyridine-2,6-dicarboxylate N-succinyltransferase (274 aa).

Residues arginine 104 and aspartate 141 each contribute to the substrate site.

It belongs to the transferase hexapeptide repeat family. Homotrimer.

Its subcellular location is the cytoplasm. The enzyme catalyses (S)-2,3,4,5-tetrahydrodipicolinate + succinyl-CoA + H2O = (S)-2-succinylamino-6-oxoheptanedioate + CoA. It functions in the pathway amino-acid biosynthesis; L-lysine biosynthesis via DAP pathway; LL-2,6-diaminopimelate from (S)-tetrahydrodipicolinate (succinylase route): step 1/3. The sequence is that of 2,3,4,5-tetrahydropyridine-2,6-dicarboxylate N-succinyltransferase from Shewanella denitrificans (strain OS217 / ATCC BAA-1090 / DSM 15013).